Reading from the N-terminus, the 552-residue chain is 3-hydroxy-3-methylglutaryl-coenzyme A reductase 1 (552 aa).

Composition is skewed to low complexity over residues 79 to 99 (QHNQ…QQPQ) and 112 to 122 (QQQQQQQQQQQ). Residues 79–138 (QHNQQQQQKQQPSQDYIQQPQNDNNINSGKEQEQQQQQQQQQQQTPDITNQPTKTNKKIP) form a disordered region. The span at 123 to 132 (TPDITNQPTK) shows a compositional bias: polar residues. Glu-237 functions as the Charge relay system in the catalytic mechanism. Residue Asn-288 is glycosylated (N-linked (GlcNAc...) asparagine). Lys-369 (charge relay system) is an active-site residue. A glycan (N-linked (GlcNAc...) asparagine) is linked at Asn-375. Asp-445 acts as the Charge relay system in catalysis. The active-site Proton donor is His-543.

This sequence belongs to the HMG-CoA reductase family.

The protein resides in the endoplasmic reticulum membrane. It catalyses the reaction (R)-mevalonate + 2 NADP(+) + CoA = (3S)-3-hydroxy-3-methylglutaryl-CoA + 2 NADPH + 2 H(+). The protein operates within metabolic intermediate biosynthesis; (R)-mevalonate biosynthesis; (R)-mevalonate from acetyl-CoA: step 3/3. Functionally, this transmembrane glycoprotein is involved in the control of cholesterol biosynthesis. It is the rate-limiting enzyme of the sterol biosynthesis. In Dictyostelium discoideum (Social amoeba), this protein is 3-hydroxy-3-methylglutaryl-coenzyme A reductase 1 (hmgA).